The sequence spans 152 residues: FMN reductase (NADH) RutF (152 aa).

The protein belongs to the non-flavoprotein flavin reductase family. RutF subfamily.

The catalysed reaction is FMNH2 + NAD(+) = FMN + NADH + 2 H(+). Its function is as follows. Catalyzes the reduction of FMN to FMNH2 which is used to reduce pyrimidine by RutA via the Rut pathway. The chain is FMN reductase (NADH) RutF from Shigella sonnei (strain Ss046).